A 206-amino-acid chain; its full sequence is MGGKWSKSSVVGWPAVRERMRRAEPAADGVGAASRDLEKHGAITSSNTAANNAACAWLEAQEEEKVGFPVTPQVPLRPMTYKAAVDLSHFLKEKGGLEGLIHSQRRQDILDLWIYHTQGYFPDWQNYTPGPGIRYPLTFGWCYKLVPVEPEKLEEANKGENTSLLHPVSLHGMDDPEREVLEWRFDSRLAFHHVARELHPEYFKNC.

Gly2 carries N-myristoyl glycine; by host lipidation. Ser6 carries the phosphoserine; by host modification. Residues 62-65 form an acidic; interacts with host PACS1 and PACS2; stabilizes the interaction of NEF/MHC-I with host AP1M1; necessary for MHC-I internalization region; it reads EEEK. Residues 69 to 78 are SH3-binding; interaction with Src family tyrosine kinases; that stretch reads PVTPQVPLRP. A PxxP; stabilizes the interaction of NEF/MHC-I with host AP1M1; necessary for MHC-I internalization motif is present at residues 72 to 75; it reads PQVP. The mediates dimerization, Nef-PTE1 interaction stretch occupies residues 108 to 124; it reads DILDLWIYHTQGYFPDW. The tract at residues 148–180 is binding to ATP6V1H; sequence VEPEKLEEANKGENTSLLHPVSLHGMDDPEREV. Residues 164-165 carry the Dileucine internalization motif; necessary for CD4 internalization motif; the sequence is LL. The Diacidic; necessary for CD4 internalization motif lies at 174–175; that stretch reads DD.

It belongs to the lentivirus primate group Nef protein family. Monomer; cytosolic form. Homodimer; membrane bound form. Interacts with Nef associated p21-activated kinase (PAK2); this interaction activates PAK2. Associates with the Nef-MHC-I-AP1 complex; this complex is required for MHC-I internalization. Interacts (via C-terminus) with host PI3-kinase. Interacts with host PACS1; this interaction seems to be weak. Interacts with host PACS2. Interacts with host LCK and MAPK3; these interactions inhibit the kinase activity of the latter. Interacts with host ATP6V1H; this interaction may play a role in CD4 endocytosis. Associates with the CD4-Nef-AP2 complex; this complex is required for CD4 internalization. Interacts with host AP2 subunit alpha and AP2 subunit sigma2. Interacts with TCR-zeta chain; this interaction up-regulates the Fas ligand (FasL) surface expression. Interacts with host HCK, LYN, and SRC; these interactions activate the Src family kinases. Interacts with MAP3K5; this interaction inhibits the Fas and TNFR-mediated death signals. Interacts with beta-COP and PTE1. Interacts with human RACK1; this increases Nef phosphorylation by PKC. Interacts with TP53; this interaction decreases the half-life of TP53, protecting the infected cell against p53-mediated apoptosis. The virion-associated Nef proteins are cleaved by the viral protease to release the soluble C-terminal core protein. Nef is probably cleaved concomitantly with viral structural proteins on maturation of virus particles. Post-translationally, myristoylated. In terms of processing, phosphorylated on serine residues, probably by host PKCdelta and theta.

The protein localises to the host cell membrane. It localises to the virion. It is found in the secreted. The protein resides in the host Golgi apparatus membrane. In terms of biological role, factor of infectivity and pathogenicity, required for optimal virus replication. Alters numerous pathways of T-lymphocyte function and down-regulates immunity surface molecules in order to evade host defense and increase viral infectivity. Alters the functionality of other immunity cells, like dendritic cells, monocytes/macrophages and NK cells. In infected CD4(+) T-lymphocytes, down-regulates the surface MHC-I, mature MHC-II, CD4, CD28, CCR5 and CXCR4 molecules. Mediates internalization and degradation of host CD4 through the interaction of with the cytoplasmic tail of CD4, the recruitment of AP-2 (clathrin adapter protein complex 2), internalization through clathrin coated pits, and subsequent transport to endosomes and lysosomes for degradation. Diverts host MHC-I molecules to the trans-Golgi network-associated endosomal compartments by an endocytic pathway to finally target them for degradation. MHC-I down-regulation may involve AP-1 (clathrin adapter protein complex 1) or possibly Src family kinase-ZAP70/Syk-PI3K cascade recruited by PACS2. In consequence infected cells are masked for immune recognition by cytotoxic T-lymphocytes. Decreasing the number of immune receptors also prevents reinfection by more HIV particles (superinfection). Down-regulates host SERINC3 and SERINC5 thereby excluding these proteins from the viral particles. Virion infectivity is drastically higher when SERINC3 or SERINC5 are excluded from the viral envelope, because these host antiviral proteins impair the membrane fusion event necessary for subsequent virion penetration. Its function is as follows. Bypasses host T-cell signaling by inducing a transcriptional program nearly identical to that of anti-CD3 cell activation. Interaction with TCR-zeta chain up-regulates the Fas ligand (FasL). Increasing surface FasL molecules and decreasing surface MHC-I molecules on infected CD4(+) cells send attacking cytotoxic CD8+ T-lymphocytes into apoptosis. Functionally, plays a role in optimizing the host cell environment for viral replication without causing cell death by apoptosis. Protects the infected cells from apoptosis in order to keep them alive until the next virus generation is ready to strike. Inhibits the Fas and TNFR-mediated death signals by blocking MAP3K5/ASK1. Decreases the half-life of TP53, protecting the infected cell against p53-mediated apoptosis. Inhibits the apoptotic signals regulated by the Bcl-2 family proteins through the formation of a Nef/PI3-kinase/PAK2 complex that leads to activation of PAK2 and induces phosphorylation of host BAD. In terms of biological role, extracellular Nef protein targets CD4(+) T-lymphocytes for apoptosis by interacting with CXCR4 surface receptors. The polypeptide is Protein Nef (Homo sapiens (Human)).